A 425-amino-acid chain; its full sequence is Serine--tRNA ligase (425 aa).

233 to 235 is an L-serine binding site; sequence TAE. Position 264–266 (264–266) interacts with ATP; it reads RRE. E287 contributes to the L-serine binding site. 351–354 contributes to the ATP binding site; the sequence is EISS. S385 contributes to the L-serine binding site.

The protein belongs to the class-II aminoacyl-tRNA synthetase family. Type-1 seryl-tRNA synthetase subfamily. Homodimer. The tRNA molecule binds across the dimer.

The protein resides in the cytoplasm. The enzyme catalyses tRNA(Ser) + L-serine + ATP = L-seryl-tRNA(Ser) + AMP + diphosphate + H(+). It carries out the reaction tRNA(Sec) + L-serine + ATP = L-seryl-tRNA(Sec) + AMP + diphosphate + H(+). It functions in the pathway aminoacyl-tRNA biosynthesis; selenocysteinyl-tRNA(Sec) biosynthesis; L-seryl-tRNA(Sec) from L-serine and tRNA(Sec): step 1/1. Functionally, catalyzes the attachment of serine to tRNA(Ser). Is also able to aminoacylate tRNA(Sec) with serine, to form the misacylated tRNA L-seryl-tRNA(Sec), which will be further converted into selenocysteinyl-tRNA(Sec). This chain is Serine--tRNA ligase, found in Prochlorococcus marinus (strain MIT 9515).